We begin with the raw amino-acid sequence, 368 residues long: Peptide chain release factor 2 (368 aa).

Q249 is subject to N5-methylglutamine.

It belongs to the prokaryotic/mitochondrial release factor family. Post-translationally, methylated by PrmC. Methylation increases the termination efficiency of RF2.

The protein resides in the cytoplasm. Peptide chain release factor 2 directs the termination of translation in response to the peptide chain termination codons UGA and UAA. The protein is Peptide chain release factor 2 of Rhodococcus jostii (strain RHA1).